Here is a 261-residue protein sequence, read N- to C-terminus: Ribonuclease 3 (261 aa).

The region spanning Tyr20–Gly144 is the RNase III domain. Glu62 is a Mg(2+) binding site. Asp66 is a catalytic residue. Mg(2+)-binding residues include Asn130 and Glu133. Residue Glu133 is part of the active site. One can recognise a DRBM domain in the interval Asn172–Thr241.

Belongs to the ribonuclease III family. As to quaternary structure, homodimer. Mg(2+) is required as a cofactor.

It is found in the cytoplasm. The enzyme catalyses Endonucleolytic cleavage to 5'-phosphomonoester.. Its function is as follows. Digests double-stranded RNA. Involved in the processing of primary rRNA transcript to yield the immediate precursors to the large and small rRNAs (23S and 16S). Processes some mRNAs, and tRNAs when they are encoded in the rRNA operon. Processes pre-crRNA and tracrRNA of type II CRISPR loci if present in the organism. This chain is Ribonuclease 3, found in Azobacteroides pseudotrichonymphae genomovar. CFP2.